Here is a 672-residue protein sequence, read N- to C-terminus: Forkhead box protein O3 (672 aa).

Disordered stretches follow at residues 1–85 and 110–152; these read MAEA…GVSS and GPAS…CSSR. Ser-30 bears the Phosphoserine mark. At Thr-32 the chain carries Phosphothreonine. At Lys-46 the chain carries N6-methyllysine. Acidic residues predominate over residues 57–68; sequence IPEEDDDEDDED. Residues 80–108 are required for mitochondrial import; it reads GGGVSSTLGSGLLLEDSAMLLAPGGQDLG. Positions 110–129 are enriched in low complexity; sequence GPASAAGALSGGTPTQLQPQ. Lys-148 is subject to N6-methyllysine. Positions 156-250 form a DNA-binding region, fork-head; it reads WGNLSYADLI…KSGKAPRRRA (95 aa). Position 178 is a phosphothreonine (Thr-178). A phosphoserine mark is found at Ser-208 and Ser-214. N6-methyllysine is present on Lys-229. The disordered stretch occupies residues 230–301; sequence SSWWIINPDG…GSPTSRSSDE (72 aa). Position 241 is an N6-acetyllysine (Lys-241). The Nuclear localization signal motif lies at 241–258; sequence KSGKAPRRRAVSMDNSNK. Position 252 is a phosphoserine (Ser-252). Residues 260 to 271 are compositionally biased toward basic residues; the sequence is TKSRGRAAKKKA. N6-methyllysine occurs at positions 261 and 270. Ser-279 and Ser-283 each carry phosphoserine. The segment covering 282-297 has biased composition (polar residues); the sequence is DSPSQLSKWPGSPTSR. Lys-289 is modified (N6-methyllysine). Ser-293 carries the post-translational modification Phosphoserine. The residue at position 298 (Ser-298) is a Phosphoserine; by CaMK2A. A mediates interaction with CHUK/IKKA and IKBKB/IKKB region spans residues 299 to 672; that stretch reads SDELDAWTDF…QASSQSWVPG (374 aa). A Phosphoserine modification is found at Ser-310. A Phosphoserine; by SGK1 modification is found at Ser-314. Phosphoserine; by AMPK occurs at positions 398 and 412. Disordered regions lie at residues 399–441 and 535–583; these read QPSP…SLNS and HQHQ…QTLS. Polar residues-rich tracts occupy residues 409 to 441 and 548 to 577; these read RGSS…SLNS and ALSN…PASQ. An N6-methyllysine modification is found at Lys-418. Ser-420 is modified (phosphoserine). Ser-550 bears the Phosphoserine; by MAPKAPK5 mark. Ser-554 is subject to Phosphoserine; by AMPK and MAPKAPK5. Residues Ser-587 and Ser-625 each carry the phosphoserine; by AMPK modification. Ser-643 is subject to Phosphoserine; by IKKB.

Upon metabolic stress, forms a complex composed of FOXO3, SIRT3 and mitochondrial RNA polymerase POLRMT; the complex is recruited to mtDNA in a SIRT3-dependent manner. Also forms a complex composed of FOXO3, SIRT3, TFAM and POLRMT. Interacts with SIRT2; the interaction occurs independently of SIRT2 deacetylase activity. Interacts with YWHAB/14-3-3-beta and YWHAZ/14-3-3-zeta, which are required for cytosolic sequestration. Upon oxidative stress, interacts with STK4/MST1, which disrupts interaction with YWHAB/14-3-3-beta and leads to nuclear translocation. Interacts with PIM1. Interacts with DDIT3/CHOP. Interacts (deacetylated form) with SKP2. Interacts with CHUK and IKBKB. Interacts with CAMK2A, CAMK2B and calcineurin A. Interacts with NUPR1; this interaction represses FOXO3 transactivation. Post-translationally, deacetylation by SIRT1 or SIRT2 stimulates interaction of FOXO3 with SKP2 and facilitates SCF(SKP2)-mediated FOXO3 ubiquitination and proteasomal degradation. Deacetylation by SIRT2 stimulates FOXO3-mediated transcriptional activity in response to oxidative stress. Deacetylated by SIRT3. Deacetylation by SIRT3 stimulates FOXO3-mediated mtDNA transcriptional activity in response to metabolic stress. In terms of processing, in the presence of survival factors such as IGF1, phosphorylated on Thr-32 and Ser-252 by AKT1/PKB. This phosphorylated form then interacts with 14-3-3 proteins and is retained in the cytoplasm. Survival factor withdrawal induces dephosphorylation and promotes translocation to the nucleus where the dephosphorylated protein induces transcription of target genes and triggers apoptosis. Although AKT1/PKB doesn't appear to phosphorylate Ser-314 directly, it may activate other kinases that trigger phosphorylation at this residue. Phosphorylated by STK4/MST1 on Ser-208 upon oxidative stress, which leads to dissociation from YWHAB/14-3-3-beta and nuclear translocation. Phosphorylated by PIM1. Phosphorylation by AMPK leads to the activation of transcriptional activity without affecting subcellular localization. Phosphorylated by AMPK on Ser-30 in response to metabolic stress which mediates FOXO3 mitochondrial translocation. Phosphorylation by MAPKAPK5 promotes nuclear localization and DNA-binding, leading to induction of miR-34b and miR-34c expression, 2 post-transcriptional regulators of MYC that bind to the 3'UTR of MYC transcript and prevent its translation. Phosphorylated by CHUK/IKKA and IKBKB/IKKB. TNF-induced inactivation of FOXO3 requires its phosphorylation at Ser-643 by IKBKB/IKKB which promotes FOXO3 retention in the cytoplasm, polyubiquitination and ubiquitin-mediated proteasomal degradation. May be dephosphorylated by calcineurin A on Ser-298 which abolishes FOXO3 transcriptional activity. Phosphorylation at Ser-252 promotes its degradation by the proteasome. Dephosphorylation at Ser-252 by protein phosphatase 2A (PPP2CA) promotes its stabilization; interaction with PPP2CA is enhanced by AMBRA1. Heavily methylated by SET9 which decreases stability, while moderately increasing transcriptional activity. The main methylation site is Lys-270. Methylation doesn't affect subcellular location. Post-translationally, polyubiquitinated. Ubiquitinated by a SCF complex containing SKP2, leading to proteasomal degradation. In terms of processing, the N-terminus is cleaved following import into the mitochondrion. As to expression, expressed in white and brown adipose tissues (at protein level). Expressed in liver, kidney, lung and colon (at protein level). Expressed in skeletal muscles (at protein level).

It is found in the cytoplasm. The protein localises to the cytosol. Its subcellular location is the nucleus. It localises to the mitochondrion matrix. The protein resides in the mitochondrion outer membrane. In terms of biological role, transcriptional activator that recognizes and binds to the DNA sequence 5'-[AG]TAAA[TC]A-3' and regulates different processes, such as apoptosis and autophagy. Acts as a positive regulator of autophagy in skeletal muscle: in starved cells, enters the nucleus following dephosphorylation and binds the promoters of autophagy genes, such as GABARAP1L, MAP1LC3B and ATG12, thereby activating their expression, resulting in proteolysis of skeletal muscle proteins. Triggers apoptosis in the absence of survival factors, including neuronal cell death upon oxidative stress. Participates in post-transcriptional regulation of MYC: following phosphorylation by MAPKAPK5, promotes induction of miR-34b and miR-34c expression, 2 post-transcriptional regulators of MYC that bind to the 3'UTR of MYC transcript and prevent its translation. In response to metabolic stress, translocates into the mitochondria where it promotes mtDNA transcription. Also acts as a key regulator of chondrogenic commitment of skeletal progenitor cells in response to lipid availability: when lipids levels are low, translocates to the nucleus and promotes expression of SOX9, which induces chondrogenic commitment and suppresses fatty acid oxidation. Also acts as a key regulator of regulatory T-cells (Treg) differentiation by activating expression of FOXP3. The protein is Forkhead box protein O3 of Mus musculus (Mouse).